A 227-amino-acid chain; its full sequence is Adapter protein MecA 1 (227 aa).

This sequence belongs to the MecA family. In terms of assembly, homodimer.

In terms of biological role, enables the recognition and targeting of unfolded and aggregated proteins to the ClpC protease or to other proteins involved in proteolysis. Acts negatively in the development of competence by binding ComK and recruiting it to the ClpCP protease. When overexpressed, inhibits sporulation. Also involved in Spx degradation by ClpC. The sequence is that of Adapter protein MecA 1 (mecA1) from Bacillus anthracis.